We begin with the raw amino-acid sequence, 609 residues long: UvrABC system protein C (609 aa).

Positions 15-92 (TGSGVYQMQD…IKQFRPRYNV (78 aa)) constitute a GIY-YIG domain. Residues 202 to 237 (DQVIIKLTERMEVTSENLVFEEAAHYRDQIRQLRRL) form the UVR domain.

The protein belongs to the UvrC family. In terms of assembly, interacts with UvrB in an incision complex.

Its subcellular location is the cytoplasm. Functionally, the UvrABC repair system catalyzes the recognition and processing of DNA lesions. UvrC both incises the 5' and 3' sides of the lesion. The N-terminal half is responsible for the 3' incision and the C-terminal half is responsible for the 5' incision. This is UvrABC system protein C from Coxiella burnetii (strain RSA 493 / Nine Mile phase I).